The primary structure comprises 328 residues: Malate dehydrogenase (328 aa).

Residue 12–18 participates in NAD(+) binding; it reads GAAGQIG. Residues R95 and R101 each contribute to the substrate site. Residues N108, Q115, and 132–134 each bind NAD(+); that span reads VGN. Substrate-binding residues include N134 and R165. Catalysis depends on H190, which acts as the Proton acceptor.

It belongs to the LDH/MDH superfamily. MDH type 2 family.

It catalyses the reaction (S)-malate + NAD(+) = oxaloacetate + NADH + H(+). In terms of biological role, catalyzes the reversible oxidation of malate to oxaloacetate. The protein is Malate dehydrogenase of Methylibium petroleiphilum (strain ATCC BAA-1232 / LMG 22953 / PM1).